A 64-amino-acid chain; its full sequence is Translation machinery-associated protein 7B (64 aa).

The segment at 1–38 (MSSHEGGKKKALKQPKKQAKEMDEEEKAFKQKQKEEQK) is disordered. Residues 27 to 38 (KAFKQKQKEEQK) show a composition bias toward basic and acidic residues.

The protein belongs to the TMA7 family.

The chain is Translation machinery-associated protein 7B from Homo sapiens (Human).